Here is a 293-residue protein sequence, read N- to C-terminus: Ribosomal protein L11 methyltransferase (293 aa).

S-adenosyl-L-methionine is bound by residues T144, G165, D187, and N228.

Belongs to the methyltransferase superfamily. PrmA family.

Its subcellular location is the cytoplasm. The enzyme catalyses L-lysyl-[protein] + 3 S-adenosyl-L-methionine = N(6),N(6),N(6)-trimethyl-L-lysyl-[protein] + 3 S-adenosyl-L-homocysteine + 3 H(+). Methylates ribosomal protein L11. The sequence is that of Ribosomal protein L11 methyltransferase from Methylococcus capsulatus (strain ATCC 33009 / NCIMB 11132 / Bath).